The primary structure comprises 231 residues: MPVDIGKLVTPVDSAHPGSAILVEPADAVPFERSWADQRHWQQRLLEQPHLPEAVWLLQHKACYTLGRGASSEHLHFPLDQPPAPVHRIDRGGEVTHHLPGQLVAYPVLDLRRRQPDLHWYLRELEQVLIDVLAQLDLRGERLPGLTGLWLDNRKVAAIGVGCRRWITQHGLALNIDCELAGFDQVTPCGLSGRAVGRLVDWIPGLRLAEVQPLLRDALAARFHLAWCDEA.

The BPL/LPL catalytic domain occupies 49–227; it reads PHLPEAVWLL…ALAARFHLAW (179 aa). Substrate contacts are provided by residues 91-98, 158-160, and 171-173; these read RGGEVTHH, AIG, and GLA. Residue Cys-189 is the Acyl-thioester intermediate of the active site.

This sequence belongs to the LipB family.

It localises to the cytoplasm. It carries out the reaction octanoyl-[ACP] + L-lysyl-[protein] = N(6)-octanoyl-L-lysyl-[protein] + holo-[ACP] + H(+). The protein operates within protein modification; protein lipoylation via endogenous pathway; protein N(6)-(lipoyl)lysine from octanoyl-[acyl-carrier-protein]: step 1/2. Its function is as follows. Catalyzes the transfer of endogenously produced octanoic acid from octanoyl-acyl-carrier-protein onto the lipoyl domains of lipoate-dependent enzymes. Lipoyl-ACP can also act as a substrate although octanoyl-ACP is likely to be the physiological substrate. The protein is Octanoyltransferase of Parasynechococcus marenigrum (strain WH8102).